The chain runs to 429 residues: Adenylosuccinate synthetase (429 aa).

Residues 12-18 and 40-42 each bind GTP; these read GDEGKGK and GHT. The active-site Proton acceptor is the Asp-13. Residues Asp-13 and Gly-40 each coordinate Mg(2+). Residues 13–16, 38–41, Thr-128, Arg-142, Gln-223, Thr-238, and Arg-302 contribute to the IMP site; these read DEGK and NAGH. The Proton donor role is filled by His-41. Position 298–304 (298–304) interacts with substrate; it reads TVTGRPR. Residues Arg-304, 330-332, and 412-414 each bind GTP; these read LLD and SVG.

The protein belongs to the adenylosuccinate synthetase family. In terms of assembly, homodimer. Mg(2+) is required as a cofactor.

It is found in the cytoplasm. The enzyme catalyses IMP + L-aspartate + GTP = N(6)-(1,2-dicarboxyethyl)-AMP + GDP + phosphate + 2 H(+). Its pathway is purine metabolism; AMP biosynthesis via de novo pathway; AMP from IMP: step 1/2. Its function is as follows. Plays an important role in the de novo pathway of purine nucleotide biosynthesis. Catalyzes the first committed step in the biosynthesis of AMP from IMP. The sequence is that of Adenylosuccinate synthetase from Lactobacillus acidophilus (strain ATCC 700396 / NCK56 / N2 / NCFM).